A 425-amino-acid polypeptide reads, in one-letter code: Podosporapepsin (425 aa).

An N-terminal signal peptide occupies residues 1–28; it reads MVSLTDLFLASLLVPTSPWLCLPPRIDT. A propeptide spans 29–91 (activation peptide); the sequence is IDQRGGRVTL…QEEAFARIKR (63 aa). Residues 108-419 enclose the Peptidase A1 domain; sequence YVTPVTIGTP…GTNPPRIGFA (312 aa). The active site involves aspartate 126. 2 N-linked (GlcNAc...) asparagine glycosylation sites follow: asparagine 184 and asparagine 273. Aspartate 310 is a catalytic residue. A disulfide bond links cysteine 346 and cysteine 381. Asparagine 370 carries an N-linked (GlcNAc...) asparagine glycan.

It belongs to the peptidase A1 family.

The chain is Podosporapepsin (PAPA) from Podospora anserina (Pleurage anserina).